A 384-amino-acid chain; its full sequence is DNA dC-&gt;dU-editing enzyme APOBEC-3G (384 aa).

The segment at 1–60 (MTPQFRNTVERMYRDTFSYNFNNRPILSRRNTVWLCYEVKTKDPSRPPLDAKIFRGQVYS) is essential for cytoplasmic localization. 2 CMP/dCMP-type deaminase domains span residues 29–138 (RRNT…LRSL) and 214–328 (GRHE…LRTL). The residue at position 32 (threonine 32) is a Phosphothreonine; by PKA. Positions 65, 97, and 100 each coordinate Zn(2+). Residues 209–336 (EHWVRGRHET…TLAEAGAKIS (128 aa)) form a necessary for homooligomerization region. The tract at residues 213-215 (RGR) is interaction with DNA. Threonine 218 bears the Phosphothreonine; by PKA and CAMK2 mark. Histidine 257 is a binding site for Zn(2+). Glutamate 259 functions as the Proton donor in the catalytic mechanism. Residues cysteine 288 and cysteine 291 each contribute to the Zn(2+) site. The segment at 313–320 (RIYDDQGR) is interaction with DNA.

The protein belongs to the cytidine and deoxycytidylate deaminase family. As to quaternary structure, homodimer. Homooligomer. Can bind RNA to form ribonucleoprotein complexes of high-molecular-mass (HMM) or low-molecular-mass (LMM). HMM is inactive and heterogeneous in protein composition because of binding nonselectively to cellular RNAs, which in turn are associated with variety of cellular proteins. The LMM form which is enzymatically active has few or no RNAs associated. Its ability to form homooligomer is distinct from its ability to assemble into HMM. Interacts with APOBEC3B, APOBEC3F, MOV10, AGO2, EIF4E, EIF4ENIF1, DCP2 and DDX6 in an RNA-dependent manner. Interacts with AGO1, AGO3 and PKA/PRKACA. Zn(2+) is required as a cofactor.

The protein resides in the cytoplasm. It localises to the nucleus. It is found in the P-body. The enzyme catalyses a 2'-deoxycytidine in single-stranded DNA + H2O + H(+) = a 2'-deoxyuridine in single-stranded DNA + NH4(+). In terms of biological role, DNA deaminase (cytidine deaminase) which acts as an inhibitor of retrovirus replication and retrotransposon mobility. After the penetration of retroviral nucleocapsids into target cells of infection and the initiation of reverse transcription, it can induce the conversion of cytosine to uracil in the minus-sense single-strand viral DNA, leading to G-to-A hypermutations in the subsequent plus-strand viral DNA. The resultant detrimental levels of mutations in the proviral genome, along with a deamination-independent mechanism that works prior to the proviral integration, together exert efficient antiretroviral effects in infected target cells. Selectively targets single-stranded DNA and does not deaminate double-stranded DNA or single- or double-stranded RNA. This Gorilla gorilla gorilla (Western lowland gorilla) protein is DNA dC-&gt;dU-editing enzyme APOBEC-3G (APOBEC3G).